The following is a 209-amino-acid chain: C-type lectin domain family 6 member A (209 aa).

Residues 1 to 20 (MMQEQQPQSTEKRGWLSLRL) lie on the Cytoplasmic side of the membrane. Residues 21–41 (WSVAGISIALLSACFIVSCVV) form a helical; Signal-anchor for type II membrane protein membrane-spanning segment. At 42–209 (TYHFTYGETG…SICEMNKIYL (168 aa)) the chain is on the extracellular side. Disulfide bonds link Cys66–Cys78, Cys79–Cys90, Cys107–Cys202, and Cys176–Cys194. A C-type lectin domain is found at 86 to 203 (FGSSCYFISS…CETRRNSICE (118 aa)). Val116, Asn118, and Glu122 together coordinate Ca(2+). N-linked (GlcNAc...) asparagine glycosylation is present at Asn131. Glu168, Asn170, and Glu174 together coordinate Ca(2+). Alpha-D-mannopyranose-binding positions include 168–170 (EPN), Glu174, Trp182, 190–191 (ND), and Arg198. Asn170 carries an N-linked (GlcNAc...) asparagine glycan. Positions 190 and 191 each coordinate Ca(2+). Glu203 serves as a coordination point for Ca(2+).

As to quaternary structure, associated with FCER1G. Heterodimer with CLEC4D; this heterodimer forms a pattern recognition receptor (PRR) against fungal infection. As to expression, expressed in lung, spleen, lymph node, leukocytes, bone marrow, tonsils and dendritic cells. Strongly expressed in purified monocytes and weakly in B-cells. In peripheral blood cells, preferentially expressed in plasmacytoids rather than myeloids.

The protein resides in the cell membrane. Its function is as follows. Calcium-dependent lectin that acts as a pattern recognition receptor (PRR) of the innate immune system: specifically recognizes and binds alpha-mannans on C.albicans hypheas. Binding of C.albicans alpha-mannans to this receptor complex leads to phosphorylation of the immunoreceptor tyrosine-based activation motif (ITAM) of FCER1G, triggering activation of SYK, CARD9 and NF-kappa-B, consequently driving maturation of antigen-presenting cells and shaping antigen-specific priming of T-cells toward effector T-helper 1 and T-helper 17 cell subtypes. Recognizes also, in a mannose-dependent manner, allergens from house dust mite and fungi, by promoting cysteinyl leukotriene production. Recognizes soluble elements from the eggs of Shistosoma mansoni altering adaptive immune responses. This Homo sapiens (Human) protein is C-type lectin domain family 6 member A.